Reading from the N-terminus, the 45-residue chain is Proteinase inhibitor IIA (45 aa).

3 disulfides stabilise this stretch: cysteine 10–cysteine 24, cysteine 14–cysteine 35, and cysteine 20–cysteine 43.

It belongs to the protease inhibitor I20 (potato type II proteinase inhibitor) family.

It localises to the secreted. Inhibits trypsin strongly and chymotrypsin temporarily. This chain is Proteinase inhibitor IIA, found in Solanum tuberosum (Potato).